Consider the following 123-residue polypeptide: Large ribosomal subunit protein uL14 (123 aa).

The protein belongs to the universal ribosomal protein uL14 family. Part of the 50S ribosomal subunit. Forms a cluster with proteins L3 and L19. In the 70S ribosome, L14 and L19 interact and together make contacts with the 16S rRNA in bridges B5 and B8.

Binds to 23S rRNA. Forms part of two intersubunit bridges in the 70S ribosome. This Proteus mirabilis (strain HI4320) protein is Large ribosomal subunit protein uL14.